The chain runs to 255 residues: 1-(5-phosphoribosyl)-5-[(5-phosphoribosylamino)methylideneamino] imidazole-4-carboxamide isomerase (255 aa).

The Proton acceptor role is filled by Asp-8. The Proton donor role is filled by Asp-129.

It belongs to the HisA/HisF family.

It localises to the cytoplasm. The catalysed reaction is 1-(5-phospho-beta-D-ribosyl)-5-[(5-phospho-beta-D-ribosylamino)methylideneamino]imidazole-4-carboxamide = 5-[(5-phospho-1-deoxy-D-ribulos-1-ylimino)methylamino]-1-(5-phospho-beta-D-ribosyl)imidazole-4-carboxamide. Its pathway is amino-acid biosynthesis; L-histidine biosynthesis; L-histidine from 5-phospho-alpha-D-ribose 1-diphosphate: step 4/9. The sequence is that of 1-(5-phosphoribosyl)-5-[(5-phosphoribosylamino)methylideneamino] imidazole-4-carboxamide isomerase from Prochlorococcus marinus (strain MIT 9211).